The sequence spans 298 residues: ATP synthase gamma chain (298 aa).

Belongs to the ATPase gamma chain family. In terms of assembly, F-type ATPases have 2 components, CF(1) - the catalytic core - and CF(0) - the membrane proton channel. CF(1) has five subunits: alpha(3), beta(3), gamma(1), delta(1), epsilon(1). CF(0) has three main subunits: a, b and c.

It is found in the cell inner membrane. Produces ATP from ADP in the presence of a proton gradient across the membrane. The gamma chain is believed to be important in regulating ATPase activity and the flow of protons through the CF(0) complex. In Francisella tularensis subsp. tularensis (strain FSC 198), this protein is ATP synthase gamma chain.